Here is a 606-residue protein sequence, read N- to C-terminus: Glutamine--fructose-6-phosphate aminotransferase [isomerizing] (606 aa).

Cysteine 2 (nucleophile; for GATase activity) is an active-site residue. The Glutamine amidotransferase type-2 domain occupies cysteine 2–glycine 218. 2 consecutive SIS domains span residues phenylalanine 278 to glutamate 424 and tryptophan 455 to proline 596. The active-site For Fru-6P isomerization activity is lysine 601.

In terms of assembly, homodimer.

It is found in the cytoplasm. The enzyme catalyses D-fructose 6-phosphate + L-glutamine = D-glucosamine 6-phosphate + L-glutamate. Catalyzes the first step in hexosamine metabolism, converting fructose-6P into glucosamine-6P using glutamine as a nitrogen source. The chain is Glutamine--fructose-6-phosphate aminotransferase [isomerizing] from Chlamydia muridarum (strain MoPn / Nigg).